Reading from the N-terminus, the 313-residue chain is Ribosomal RNA small subunit methyltransferase H (313 aa).

Residues 34–36, D53, F80, D101, and Q108 contribute to the S-adenosyl-L-methionine site; that span reads GGH.

This sequence belongs to the methyltransferase superfamily. RsmH family.

Its subcellular location is the cytoplasm. The enzyme catalyses cytidine(1402) in 16S rRNA + S-adenosyl-L-methionine = N(4)-methylcytidine(1402) in 16S rRNA + S-adenosyl-L-homocysteine + H(+). In terms of biological role, specifically methylates the N4 position of cytidine in position 1402 (C1402) of 16S rRNA. The sequence is that of Ribosomal RNA small subunit methyltransferase H from Lacticaseibacillus casei (strain BL23) (Lactobacillus casei).